Here is a 67-residue protein sequence, read N- to C-terminus: DNA-directed RNA polymerase subunit omega (67 aa).

Belongs to the RNA polymerase subunit omega family. In terms of assembly, the RNAP catalytic core consists of 2 alpha, 1 beta, 1 beta' and 1 omega subunit. When a sigma factor is associated with the core the holoenzyme is formed, which can initiate transcription.

The enzyme catalyses RNA(n) + a ribonucleoside 5'-triphosphate = RNA(n+1) + diphosphate. Promotes RNA polymerase assembly. Latches the N- and C-terminal regions of the beta' subunit thereby facilitating its interaction with the beta and alpha subunits. This chain is DNA-directed RNA polymerase subunit omega, found in Exiguobacterium sibiricum (strain DSM 17290 / CCUG 55495 / CIP 109462 / JCM 13490 / 255-15).